A 213-amino-acid polypeptide reads, in one-letter code: Thiamine-phosphate synthase (213 aa).

4-amino-2-methyl-5-(diphosphooxymethyl)pyrimidine-binding positions include 43–47 and N74; that span reads QLRDK. Residues D75 and D94 each coordinate Mg(2+). S113 provides a ligand contact to 4-amino-2-methyl-5-(diphosphooxymethyl)pyrimidine. 142–144 provides a ligand contact to 2-[(2R,5Z)-2-carboxy-4-methylthiazol-5(2H)-ylidene]ethyl phosphate; the sequence is TAT. K145 contacts 4-amino-2-methyl-5-(diphosphooxymethyl)pyrimidine. Residues G173 and 193 to 194 contribute to the 2-[(2R,5Z)-2-carboxy-4-methylthiazol-5(2H)-ylidene]ethyl phosphate site; that span reads VS.

This sequence belongs to the thiamine-phosphate synthase family. Requires Mg(2+) as cofactor.

It catalyses the reaction 2-[(2R,5Z)-2-carboxy-4-methylthiazol-5(2H)-ylidene]ethyl phosphate + 4-amino-2-methyl-5-(diphosphooxymethyl)pyrimidine + 2 H(+) = thiamine phosphate + CO2 + diphosphate. The catalysed reaction is 2-(2-carboxy-4-methylthiazol-5-yl)ethyl phosphate + 4-amino-2-methyl-5-(diphosphooxymethyl)pyrimidine + 2 H(+) = thiamine phosphate + CO2 + diphosphate. The enzyme catalyses 4-methyl-5-(2-phosphooxyethyl)-thiazole + 4-amino-2-methyl-5-(diphosphooxymethyl)pyrimidine + H(+) = thiamine phosphate + diphosphate. It participates in cofactor biosynthesis; thiamine diphosphate biosynthesis; thiamine phosphate from 4-amino-2-methyl-5-diphosphomethylpyrimidine and 4-methyl-5-(2-phosphoethyl)-thiazole: step 1/1. Condenses 4-methyl-5-(beta-hydroxyethyl)thiazole monophosphate (THZ-P) and 2-methyl-4-amino-5-hydroxymethyl pyrimidine pyrophosphate (HMP-PP) to form thiamine monophosphate (TMP). The polypeptide is Thiamine-phosphate synthase (Psychrobacter sp. (strain PRwf-1)).